The primary structure comprises 338 residues: Ketol-acid reductoisomerase (NADP(+)) (338 aa).

One can recognise a KARI N-terminal Rossmann domain in the interval 2 to 182 (TKMYYEEDTD…GGARAGVLET (181 aa)). Residues 25–28 (YGSQ), serine 51, serine 53, and 83–86 (DELQ) each bind NADP(+). Histidine 108 is an active-site residue. Glycine 134 serves as a coordination point for NADP(+). The KARI C-terminal knotted domain occupies 183-330 (TFRTETETDL…SEIRKLYCWN (148 aa)). Residues aspartate 191, glutamate 195, glutamate 227, and glutamate 231 each contribute to the Mg(2+) site. Serine 252 contacts substrate.

Belongs to the ketol-acid reductoisomerase family. Mg(2+) is required as a cofactor.

The catalysed reaction is (2R)-2,3-dihydroxy-3-methylbutanoate + NADP(+) = (2S)-2-acetolactate + NADPH + H(+). The enzyme catalyses (2R,3R)-2,3-dihydroxy-3-methylpentanoate + NADP(+) = (S)-2-ethyl-2-hydroxy-3-oxobutanoate + NADPH + H(+). Its pathway is amino-acid biosynthesis; L-isoleucine biosynthesis; L-isoleucine from 2-oxobutanoate: step 2/4. The protein operates within amino-acid biosynthesis; L-valine biosynthesis; L-valine from pyruvate: step 2/4. Its function is as follows. Involved in the biosynthesis of branched-chain amino acids (BCAA). Catalyzes an alkyl-migration followed by a ketol-acid reduction of (S)-2-acetolactate (S2AL) to yield (R)-2,3-dihydroxy-isovalerate. In the isomerase reaction, S2AL is rearranged via a Mg-dependent methyl migration to produce 3-hydroxy-3-methyl-2-ketobutyrate (HMKB). In the reductase reaction, this 2-ketoacid undergoes a metal-dependent reduction by NADPH to yield (R)-2,3-dihydroxy-isovalerate. In Clostridium botulinum (strain Eklund 17B / Type B), this protein is Ketol-acid reductoisomerase (NADP(+)).